We begin with the raw amino-acid sequence, 540 residues long: Probable protein kinase UbiB (540 aa).

Residues 24–44 (LLFEQPLLPWWLASLRLLMPW) traverse the membrane as a helical segment. A Protein kinase domain is found at 126 to 494 (RFDVEPLASA…RRRQGDRWAL (369 aa)). Residues 132–140 (LASASVAQV) and lysine 154 contribute to the ATP site. Aspartate 289 serves as the catalytic Proton acceptor. Helical transmembrane passes span 496 to 516 (LLGAGLLGGGAVLAAGAAEAA) and 518 to 538 (LAAPAAWPAWLMLAAGLYLIV).

Belongs to the ABC1 family. UbiB subfamily.

Its subcellular location is the cell inner membrane. It participates in cofactor biosynthesis; ubiquinone biosynthesis [regulation]. Functionally, is probably a protein kinase regulator of UbiI activity which is involved in aerobic coenzyme Q (ubiquinone) biosynthesis. The chain is Probable protein kinase UbiB from Pseudomonas putida (strain GB-1).